The following is a 1148-amino-acid chain: Autophagy-related protein 11 (1148 aa).

Residues 567–570 (FDDI) carry the AIM (Atg8-family-interacting motif) motif. Residues 699-710 (KAEASSDVEGNK) are compositionally biased toward basic and acidic residues. Disordered stretches follow at residues 699–727 (KAEASSDVEGNKTHVSGSEPMDEVSCVSN), 754–777 (PLDSSMLESQQNNEKGGKDSEAGE), and 784–803 (NSSTAESPQKSLDDNVATGR). Polar residues-rich tracts occupy residues 754–767 (PLDSSMLESQQNNE) and 784–793 (NSSTAESPQK). 2 coiled-coil regions span residues 816–868 (ELRN…HLEN) and 956–996 (DKVS…VKTL). At T851 the chain carries Phosphothreonine. Residues 1130–1133 (YFIV) carry the AIM (Atg8-family-interacting motif) motif.

This sequence belongs to the ATG11 family. Homodimer. Interacts with ATG8E, ATG13A and ATG101. Binds to ATG8E on autophagic vesicles.

It is found in the cytoplasmic vesicle. It localises to the autophagosome. Its function is as follows. Accessory protein involved in autophagy. Acts as a scaffold protein of the ATG1-ATG13 complex for faithful delivery of autophagic vesicles to the vacuole. Involved in the stress-induced phosphorylation of ATG1A for turnover of ATG1-ATG13 complex and proper ATG1-ATG13 complex assembly or activity. Required for selective mitophagy. Required for senescence-induced breakdown of mitochondria-resident proteins and mitochondrial vesicles. Seems not essential for ATG8-mediated autophagy. This Arabidopsis thaliana (Mouse-ear cress) protein is Autophagy-related protein 11.